The sequence spans 183 residues: tRNA-splicing endonuclease (183 aa).

Active-site residues include Tyr-120, His-128, and Lys-159.

The protein belongs to the tRNA-intron endonuclease family. Archaeal short subfamily. In terms of assembly, homotetramer; although the tetramer contains four active sites, only two participate in the cleavage. Therefore, it should be considered as a dimer of dimers.

It carries out the reaction pretRNA = a 3'-half-tRNA molecule with a 5'-OH end + a 5'-half-tRNA molecule with a 2',3'-cyclic phosphate end + an intron with a 2',3'-cyclic phosphate and a 5'-hydroxyl terminus.. Its function is as follows. Endonuclease that removes tRNA introns. Cleaves pre-tRNA at the 5'- and 3'-splice sites to release the intron. The products are an intron and two tRNA half-molecules bearing 2',3' cyclic phosphate and 5'-OH termini. Recognizes a pseudosymmetric substrate in which 2 bulged loops of 3 bases are separated by a stem of 4 bp. This Pyrobaculum aerophilum (strain ATCC 51768 / DSM 7523 / JCM 9630 / CIP 104966 / NBRC 100827 / IM2) protein is tRNA-splicing endonuclease.